The following is a 165-amino-acid chain: MRQKGHRHGRTVSPCAGCKLLRRKCVKDSCVFAPYFPAKEPYKFAIVHKIFGASNVNKMLQELSENHRSDAVDSMVYEANARIQDPVYGCVGTISSLHRQLETLQTQLAFAQAELIHIRTLHRIHTKPPPYTASTVTFPSNKDFYSDIDMAVAYTDDAGDFLWSC.

The LOB domain occupies 13 to 115; it reads SPCAGCKLLR…TQLAFAQAEL (103 aa).

The protein belongs to the LOB domain-containing protein family. In terms of tissue distribution, expressed in young shoots, roots, stems, leaves and flowers. At the bases of lateral organs formed from vegetative, inflorescence, and floral meristems.

Its subcellular location is the nucleus. This is LOB domain-containing protein 3 (LBD3) from Arabidopsis thaliana (Mouse-ear cress).